Here is a 217-residue protein sequence, read N- to C-terminus: Small ribosomal subunit protein uS3 (217 aa).

Positions 40 to 110 constitute a KH type-2 domain; it reads IRDLINKWFN…EVYINIHEVR (71 aa).

Belongs to the universal ribosomal protein uS3 family. Part of the 30S ribosomal subunit. Forms a tight complex with proteins S10 and S14.

In terms of biological role, binds the lower part of the 30S subunit head. Binds mRNA in the 70S ribosome, positioning it for translation. The protein is Small ribosomal subunit protein uS3 of Rickettsia typhi (strain ATCC VR-144 / Wilmington).